Consider the following 160-residue polypeptide: S-ribosylhomocysteine lyase (160 aa).

Fe cation is bound by residues histidine 57, histidine 61, and cysteine 127.

The protein belongs to the LuxS family. As to quaternary structure, homodimer. It depends on Fe cation as a cofactor.

The enzyme catalyses S-(5-deoxy-D-ribos-5-yl)-L-homocysteine = (S)-4,5-dihydroxypentane-2,3-dione + L-homocysteine. Involved in the synthesis of autoinducer 2 (AI-2) which is secreted by bacteria and is used to communicate both the cell density and the metabolic potential of the environment. The regulation of gene expression in response to changes in cell density is called quorum sensing. Catalyzes the transformation of S-ribosylhomocysteine (RHC) to homocysteine (HC) and 4,5-dihydroxy-2,3-pentadione (DPD). In Streptococcus gordonii (strain Challis / ATCC 35105 / BCRC 15272 / CH1 / DL1 / V288), this protein is S-ribosylhomocysteine lyase.